The following is a 132-amino-acid chain: Small ribosomal subunit protein uS8 (132 aa).

Belongs to the universal ribosomal protein uS8 family. Part of the 30S ribosomal subunit. Contacts proteins S5 and S12.

Its function is as follows. One of the primary rRNA binding proteins, it binds directly to 16S rRNA central domain where it helps coordinate assembly of the platform of the 30S subunit. This chain is Small ribosomal subunit protein uS8, found in Roseiflexus castenholzii (strain DSM 13941 / HLO8).